The primary structure comprises 144 residues: Large ribosomal subunit protein uL15 (144 aa).

Basic and acidic residues predominate over residues 1–10 (MKLHELKPAE). The disordered stretch occupies residues 1 to 52 (MKLHELKPAEGSRQVRNRVGRGTSSGNGKTAGRGQKGQKARGKVRLGFEGGQ). The span at 23-35 (TSSGNGKTAGRGQ) shows a compositional bias: gly residues.

It belongs to the universal ribosomal protein uL15 family. Part of the 50S ribosomal subunit.

In terms of biological role, binds to the 23S rRNA. This is Large ribosomal subunit protein uL15 from Ligilactobacillus salivarius (strain UCC118) (Lactobacillus salivarius).